Consider the following 498-residue polypeptide: Type VI secretion system sheath protein TssC1 (498 aa).

Forms a heterodimer with TssB1. Heterodimers assemble to form the sheath of the T6SS machinery. Interacts with TssA1.

Functionally, core component of the H1 type VI (H1-T6SS) secretion system that plays a role in the release of toxins targeting both eukaryotic and prokaryotic species. Forms the sheath of the structure by assembling into tubules together with TssB1 resulting in the stacking of cogwheel-like structures showing predominantly a 12-fold symmetry. The sheath contracts to provide the energy needed for effector delivery. This is Type VI secretion system sheath protein TssC1 from Pseudomonas aeruginosa (strain ATCC 15692 / DSM 22644 / CIP 104116 / JCM 14847 / LMG 12228 / 1C / PRS 101 / PAO1).